We begin with the raw amino-acid sequence, 482 residues long: MPVVTRLIRLKCVGLRLDRSGLNRRICHGGHGESTRRRVMEELSSLTVSQREQFLVENDVFGIYNYFDASDVSTQKYMMEIQRDKQLDYLMKGLRQLGPQFSSLDANRPWLCYWILHSIALLGETVDDELESNAIDFLGRCQGSEGGYGGGPGQLPHLATTYAAVNALVTLGGDKALSSINREKMSCFLRRMKDTSGGFRMHDMGEMDVRACYTAISVASILNIMDDELTQGLGDYILSCQTYEGGIGGEPGSEAHGGYTYCGLAAMILINEVDRLNLDSLMNWAVHRQGVEMGFQGRTNKLVDGCYTFWQAAPCVLLQRLYSTNDHDVHGSSHISEGTNEEHHAHDEDDLEDSDDDDDSDEDNDEDSVNGHRIHHTSTYINRRMQLVFDSLGLQRYVLLCSKIPDGGFRDKPRKPRDFYHTCYCLSGLSVAQHAWLKDEDTPPLTRDIMGGYSNLLEPVQLLHNIVMDQYNEAIEFFFKAA.

PFTB repeat units follow at residues 131 to 172, 182 to 223, 230 to 271, and 278 to 319; these read ESNA…VTLG, REKM…SILN, TQGL…ILIN, and LDSL…VLLQ. (2E,6E)-farnesyl diphosphate contacts are provided by residues 256 to 259 and 298 to 301; these read HGGY and RTNK. Residues Asp-304 and Cys-306 each contribute to the Zn(2+) site. 307–310 serves as a coordination point for (2E,6E)-farnesyl diphosphate; that stretch reads YTFW. The interval 329 to 372 is disordered; it reads VHGSSHISEGTNEEHHAHDEDDLEDSDDDDDSDEDNDEDSVNGH. Positions 348–368 are enriched in acidic residues; that stretch reads EDDLEDSDDDDDSDEDNDEDS. Residues 391-433 form a PFTB 5 repeat; the sequence is SLGLQRYVLLCSKIPDGGFRDKPRKPRDFYHTCYCLSGLSVAQ. His-421 is a Zn(2+) binding site.

The protein belongs to the protein prenyltransferase subunit beta family. As to quaternary structure, heterodimer of FTA and FTB (farnesyltransferase). Heterodimer of an alpha and a beta subunit. Zn(2+) is required as a cofactor.

It catalyses the reaction L-cysteinyl-[protein] + (2E,6E)-farnesyl diphosphate = S-(2E,6E)-farnesyl-L-cysteinyl-[protein] + diphosphate. Its function is as follows. Catalyzes the transfer of a farnesyl moiety from farnesyl diphosphate to a cysteine at the fourth position from the C-terminus of several proteins having the C-terminal sequence Cys-aliphatic-aliphatic-X (CaaX). The beta subunit is responsible for peptide-binding. Acts as an abscisic acid (ABA) negative regulator by mediating ASG2 farnesylation and consequently monitoring its subcellular localization. Involved in responses to salt (NaCl) and osmotic (e.g. in response to mannitol and PEG) stresses. The chain is Protein farnesyltransferase subunit beta (FTB) from Arabidopsis thaliana (Mouse-ear cress).